We begin with the raw amino-acid sequence, 393 residues long: Elongation factor Tu (393 aa).

In terms of domain architecture, tr-type G spans 10 to 203 (KPHVNIGTIG…AVDSFIPDPV (194 aa)). A G1 region spans residues 19–26 (GHVDHGKT). 19-26 (GHVDHGKT) is a binding site for GTP. A Mg(2+)-binding site is contributed by T26. A G2 region spans residues 60-64 (GITIS). Residues 81-84 (DCPG) are G3. GTP contacts are provided by residues 81–85 (DCPGH) and 136–139 (NKVD). Residues 136–139 (NKVD) form a G4 region. The interval 173–175 (SAL) is G5.

This sequence belongs to the TRAFAC class translation factor GTPase superfamily. Classic translation factor GTPase family. EF-Tu/EF-1A subfamily. As to quaternary structure, monomer.

The protein localises to the cytoplasm. The catalysed reaction is GTP + H2O = GDP + phosphate + H(+). In terms of biological role, GTP hydrolase that promotes the GTP-dependent binding of aminoacyl-tRNA to the A-site of ribosomes during protein biosynthesis. The polypeptide is Elongation factor Tu (Pelodictyon phaeoclathratiforme (strain DSM 5477 / BU-1)).